The chain runs to 139 residues: D-ribose pyranase (139 aa).

Residue His-20 is the Proton donor of the active site. Substrate is bound by residues Asp-28, His-106, and 128 to 130 (YAN).

Belongs to the RbsD / FucU family. RbsD subfamily. Homodecamer.

The protein localises to the cytoplasm. The enzyme catalyses beta-D-ribopyranose = beta-D-ribofuranose. It participates in carbohydrate metabolism; D-ribose degradation; D-ribose 5-phosphate from beta-D-ribopyranose: step 1/2. Functionally, catalyzes the interconversion of beta-pyran and beta-furan forms of D-ribose. This is D-ribose pyranase from Escherichia coli O45:K1 (strain S88 / ExPEC).